The chain runs to 228 residues: Secreted LysM effector ECP6 (228 aa).

An N-terminal signal peptide occupies residues 1 to 18 (MQSMILFAAALMGAAVNG). Cystine bridges form between cysteine 36/cysteine 90, cysteine 64/cysteine 98, cysteine 109/cysteine 163, and cysteine 168/cysteine 220. Residues 42–86 (IKYTVVKGDTLTSIAKKFKSGICNIVSVNKLANPNLIELGATLII) form the LysM 1 domain. The chitin site is built by threonine 51, threonine 53, asparagine 76, and isoleucine 78. N-linked (GlcNAc...) asparagine glycosylation is found at asparagine 89, asparagine 95, asparagine 127, and asparagine 133. 2 LysM domains span residues 115–160 (GSYT…IITV) and 172–216 (GTYN…QIIL). The chitin site is built by glycine 179, leucine 181, valine 183, proline 205, serine 206, and leucine 208. N-linked (GlcNAc...) asparagine glycosylation is present at asparagine 222.

It belongs to the secreted LysM effector family. As to quaternary structure, forms homodimers.

It is found in the secreted. Secreted effector that enables the plant pathogenic fungus to manipulate host defenses for successful infection. Binds chitine, but not to any other glycan, including the N-linked glycan chitobiose. Outcompetes host immune receptor for chitin binding through intrachain LysM dimerization. During infection, sequesters chitin oligosaccharides that are released from the cell walls of invading hyphae to prevent elicitation of host immunity. The protein is Secreted LysM effector ECP6 of Passalora fulva (Tomato leaf mold).